A 2400-amino-acid polypeptide reads, in one-letter code: Retinitis pigmentosa 1-like 1 protein (2400 aa).

2 consecutive Doublecortin domains span residues 34–118 (KKIT…GPGR) and 152–231 (RRIL…PAMK). Disordered stretches follow at residues 104-152 (CSDK…KTPR), 230-310 (MKNA…DDMK), 444-1064 (GRER…DREA), 1188-1251 (AMTE…GDLE), 1275-1501 (EAER…GAAE), and 1697-2400 (RGEH…DLDF). A compositionally biased stretch (polar residues) spans 242-251 (SGLTSRNKNG). The span at 277 to 287 (RPGPSNPPVGP) shows a compositional bias: pro residues. Polar residues predominate over residues 450-460 (QDSASPASSTG). 2 stretches are compositionally biased toward low complexity: residues 530 to 543 (GASSDSSASTGSHE) and 573 to 584 (DPASPALSLSSL). The segment covering 591–601 (AETQGQGTEQA) has biased composition (polar residues). Composition is skewed to low complexity over residues 625–637 (SSTPSTCTSSQQG) and 645–654 (ASAMSSPSSP). Basic residues predominate over residues 661–670 (PRGHPRHSHY). Composition is skewed to polar residues over residues 711–740 (TRTQASGNLRPPSSGSLPSQDLLGTSSATV) and 825–835 (CCSQPGTQPAQ). Composition is skewed to low complexity over residues 864 to 880 (QRRSSSCGSTGSSHQST), 903 to 921 (PNSGASRRSSASQGAGSRG), and 941 to 953 (SGVSPSSLPRSSP). 2 stretches are compositionally biased toward polar residues: residues 1223 to 1238 (LVTQGTELPLKTSNQR) and 1285 to 1299 (ASSNLEQLAENTVQE). One copy of the 1-1; approximate repeat lies at 1292–1307 (LAENTVQEEVQLEETK). The interval 1292-1342 (LAENTVQEEVQLEETKEGTEGEGLQEEAVQLEETKTEEGLQEEGVQLEETK) is 3 X 16 AA approximate tandem repeats of T-E-E-G-L-Q-E-E-G-V-Q-L-E-E-T-K. The 1-2; approximate repeat unit spans residues 1310–1326 (TEGEGLQEEAVQLEETK). The stretch at 1327-1342 (TEEGLQEEGVQLEETK) is one 1-3 repeat. The segment covering 1346 to 1363 (GEGQQEEEAQLEEIEETG) has biased composition (acidic residues). A compositionally biased stretch (low complexity) spans 1434-1445 (RASASAEPCPAE). Composition is skewed to polar residues over residues 1460-1472 (TDPSASERQSGSQ) and 1489-1501 (EHTQAQPTQGAAE). Over residues 1726 to 1736 (AEGGLGPGLSQ) the composition is skewed to gly residues. Composition is skewed to basic and acidic residues over residues 1752-1762 (LNRDKDPKLGE) and 1769-1778 (AQEREGKTHN). Tandem repeats lie at residues 1836–1851 (EAPEAEGEAQPESEGV), 1852–1867 (EAPEAEGDAQEAEGEA), and 1875–1890 (EAPEAEGEAQPESEDV). 2 stretches are compositionally biased toward acidic residues: residues 1836–1909 (EAPE…AEAP) and 1920–1948 (ESVEALETEGEDEPESEGAEAQEAEEAAQ). A 25 X 16 AA approximate tandem repeats of [ED]-[AT]-[PQ]-[ED]-[AVT]-E-[GKE]-[ED]-[AMT]-Q-[EPK]-[EAT]-[TSELP]-[EG]-[EGSQDI]-[AVIE] region spans residues 1836–2244 (EAPEAEGEAQ…GEAQPESEGE (409 aa)). A 2-4; approximate repeat occupies 1891–1906 (ETPEAEWEVQPESEGA). Residues 1907–1921 (EAPEAEKEAQPETES) form a 2-5 repeat. Residues 1923–1938 (EALETEGEDEPESEGA) form a 2-6; approximate repeat. Positions 1934 to 2017 (ESEGAEAQEA…EMQEAEEEAQ (84 aa)) form a coiled coil. One copy of the 2-7 repeat lies at 1939–1954 (EAQEAEEAAQEAEGQT). The span at 1949–1958 (EAEGQTQPES) shows a compositional bias: low complexity. A 2-8; approximate repeat occupies 1955–1970 (QPESEVIESQEAEEEA). Composition is skewed to acidic residues over residues 1959–2022 (EVIE…ESDG), 2048–2075 (AQPESDGVEAPEAEEEAQEAEGEVQEAE), 2083–2108 (EDVDAQEAEGEAQPESEGVEAPEAEG), and 2117–2245 (EAPE…EGET). The stretch at 1971–1984 (QPESEDVEALEVEV) is one 2-9; approximate repeat. 2 tandem repeats follow at residues 1985-2000 (ETQEAEGEAQPESEDV) and 2001-2016 (EAPEAEGEMQEAEEEA). A 2-12; approximate repeat occupies 2017–2031 (QPESDGVEAQPKSEG). The 2-13d repeat unit spans residues 2033 to 2048 (EAQEVEGETQKTEGDA). The stretch at 2054 to 2081 (GVEAPEAEEEAQEAEGEVQEAEGEAHPE) forms a coiled coil. One copy of the 2-14 repeat lies at 2056-2071 (EAPEAEEEAQEAEGEV). The 2-15; approximate repeat unit spans residues 2072–2085 (QEAEGEAHPESEDV). 10 consecutive repeat copies span residues 2086 to 2101 (DAQEAEGEAQPESEGV), 2102 to 2116 (EAPEAEGEAQKAEGI), 2117 to 2132 (EAPETEGEAQPESEGI), 2133 to 2148 (EAPEAEGEAQPESEGV), 2149 to 2164 (EAQDAEGEAQPESEGI), 2165 to 2180 (EAQEAEEEAQPELEGV), 2181 to 2196 (EAPEAEGEAQPESEGI), 2197 to 2212 (EAPEAEGEAQPELEGV), 2213 to 2228 (EAPEAEEEAQPEPEGV), and 2229 to 2244 (ETPEAEGEAQPESEGE). Polar residues predominate over residues 2292 to 2308 (PGSQTGPSSSRASSWGN). Positions 2312–2327 (KDSENDHVLGDTRSPD) are enriched in basic and acidic residues.

In terms of assembly, interacts with RP1; has a synergistic effect with RP1 in photoreceptor differentiation. Retinal-specific; expressed in photoreceptor.

The protein localises to the cytoplasm. The protein resides in the cytoskeleton. It is found in the cilium axoneme. Its subcellular location is the cell projection. It localises to the cilium. The protein localises to the photoreceptor outer segment. Its function is as follows. Required for the differentiation of photoreceptor cells. Plays a role in the organization of outer segment of rod and cone photoreceptors. This chain is Retinitis pigmentosa 1-like 1 protein (RP1L1), found in Homo sapiens (Human).